The sequence spans 211 residues: uncharacterized protein (211 aa).

This is an uncharacterized protein from Homo sapiens (Human).